The chain runs to 191 residues: Small ribosomal subunit protein uS7 (191 aa).

It belongs to the universal ribosomal protein uS7 family. In terms of assembly, part of the 30S ribosomal subunit.

Its function is as follows. One of the primary rRNA binding proteins, it binds directly to 16S rRNA where it nucleates assembly of the head domain of the 30S subunit. Is located at the subunit interface close to the decoding center. This is Small ribosomal subunit protein uS7 from Methanocaldococcus jannaschii (strain ATCC 43067 / DSM 2661 / JAL-1 / JCM 10045 / NBRC 100440) (Methanococcus jannaschii).